A 211-amino-acid chain; its full sequence is Proteasome subunit beta (211 aa).

Residues 1–9 (MSEAETLKG) constitute a propeptide, removed in mature form; by autocatalysis. Thr10 functions as the Nucleophile in the catalytic mechanism.

This sequence belongs to the peptidase T1B family. The 20S proteasome core is composed of 14 alpha and 14 beta subunits that assemble into four stacked heptameric rings, resulting in a barrel-shaped structure. The two inner rings, each composed of seven catalytic beta subunits, are sandwiched by two outer rings, each composed of seven alpha subunits. The catalytic chamber with the active sites is on the inside of the barrel. Has a gated structure, the ends of the cylinder being occluded by the N-termini of the alpha-subunits. Is capped at one or both ends by the proteasome regulatory ATPase, PAN.

Its subcellular location is the cytoplasm. The enzyme catalyses Cleavage of peptide bonds with very broad specificity.. With respect to regulation, the formation of the proteasomal ATPase PAN-20S proteasome complex, via the docking of the C-termini of PAN into the intersubunit pockets in the alpha-rings, triggers opening of the gate for substrate entry. Interconversion between the open-gate and close-gate conformations leads to a dynamic regulation of the 20S proteasome proteolysis activity. Functionally, component of the proteasome core, a large protease complex with broad specificity involved in protein degradation. This Methanosphaerula palustris (strain ATCC BAA-1556 / DSM 19958 / E1-9c) protein is Proteasome subunit beta.